Reading from the N-terminus, the 743-residue chain is Capsid protein (743 aa).

Residues 665 to 706 (YVPPEEDFNIQERQQREQRPWTSESESEAEAQEETQAGSVRE) form a disordered region.

The protein belongs to the anelloviridae capsid protein family.

It is found in the virion. Functionally, self assemble to form an icosahedral capsid. The polypeptide is Capsid protein (Torque teno virus (isolate Human/China/CT39F/2001) (TTV)).